Here is a 312-residue protein sequence, read N- to C-terminus: tRNA dimethylallyltransferase (312 aa).

ATP is bound at residue 17–24 (GPTASGKT). 19–24 (TASGKT) is a substrate binding site. Interaction with substrate tRNA regions lie at residues 42 to 45 (DSAL), 166 to 170 (QRLLR), and 247 to 252 (RCVGYR).

The protein belongs to the IPP transferase family. Monomer. Requires Mg(2+) as cofactor.

The catalysed reaction is adenosine(37) in tRNA + dimethylallyl diphosphate = N(6)-dimethylallyladenosine(37) in tRNA + diphosphate. Its function is as follows. Catalyzes the transfer of a dimethylallyl group onto the adenine at position 37 in tRNAs that read codons beginning with uridine, leading to the formation of N6-(dimethylallyl)adenosine (i(6)A). In Sodalis glossinidius (strain morsitans), this protein is tRNA dimethylallyltransferase.